A 1124-amino-acid chain; its full sequence is SH3 and PX domain-containing protein 2A (1124 aa).

The 125-residue stretch at 4-128 (YCVQDATVVD…RFFEARPEDV (125 aa)) folds into the PX domain. In terms of domain architecture, SH3 1 spans 166–225 (MILEQYVVVSNYKKQENSELSLQAGEVVDVIEKNESGWWFVSTSEEQGWVPATYLEAQNG). Position 256 is a phosphothreonine (T256). The SH3 2 domain occupies 266-325 (SREEKYVTVQPYTSQSKDEIGFEKGVTVEVIRKNLEGWWYIRYLGKEGWAPASYLKKAKD). 2 positions are modified to phosphoserine: S405 and S420. Disordered stretches follow at residues 414 to 443 (QRAQISSPNLRTRPPPRRESSLGFQLPKPP), 504 to 672 (RKKP…KLKA), 692 to 830 (SVTI…PKKE), and 886 to 952 (YLVA…GKTS). In terms of domain architecture, SH3 3 spans 447–506 (SVEVEYYTIAEFQSCISDGISFRGGQKAEVIDKNSGGWWYVQIGEKEGWAPASYIDKRKK). S546 and S566 each carry phosphoserine. A compositionally biased stretch (basic and acidic residues) spans 575–585 (SGDRGSGDKHP). S592 carries the post-translational modification Phosphoserine. Residues 607-619 (SSEDVALEEETIY) are compositionally biased toward acidic residues. Composition is skewed to low complexity over residues 633-669 (SARGSSGDSDSPGSSSLSLAVKNSPKSDSPKSSSLLK) and 692-709 (SVTISTTCSSSSSSSSLS). The residue at position 643 (S643) is a Phosphoserine. Basic and acidic residues predominate over residues 713 to 739 (GDLKPRSASDAGIRDTPKVGTKKDPDV). T728 carries the phosphothreonine modification. Residues S764, S766, and S812 each carry the phosphoserine modification. T822 is modified (phosphothreonine). The SH3 4 domain occupies 833–892 (GQGATYVTCSAYQKVQDSEISFPEGAEVHVLEKAESGWWYVRFGELEGWAPSHYLVAEEN). Positions 907–937 (SSQNEGKSDSLEKIEKRVQALNTVNQSKRAT) form a coiled coil. Over residues 912 to 924 (GKSDSLEKIEKRV) the composition is skewed to basic and acidic residues. The span at 926 to 935 (ALNTVNQSKR) shows a compositional bias: polar residues. 4 positions are modified to phosphoserine: S993, S1007, S1008, and S1029. Positions 1020–1050 (KGRLAERAASQGSESPLLPTQRKGIPVSPVR) are disordered. In terms of domain architecture, SH3 5 spans 1063 to 1124 (NLKDVYISIA…VPSNYLEKKN (62 aa)).

This sequence belongs to the SH3PXD2 family. Interacts with ADAM12, ADAM15 and ADAM19. Interacts with NOXO1. Interacts (via SH3 domains) with NOXA1; the interaction is direct. Interacts (via N-terminus) with CYBA. Interacts with FASLG. Interacts (via PX domain) with RAB40B (GTP-bound); interaction promotes invadopodia-mediated extracellular matrix degradation. Tyrosine phosphorylated by SRC. Phosphorylation plays a regulatory role in the protein localization. The intramolecular interaction of the PX domain with the third SH3 domain maintains the protein in the cytoplasm and phosphorylation disrupts this interaction, resulting in the redistribution of the protein from cytoplasm to the perimembrane region. Phosphorylated on serine upon DNA damage, probably by ATM or ATR. As to expression, widely expressed. Not found in the spleen and testis.

The protein resides in the cytoplasm. It is found in the cell projection. It localises to the podosome. In terms of biological role, adapter protein involved in invadopodia and podosome formation, extracellular matrix degradation and invasiveness of some cancer cells. Binds matrix metalloproteinases (ADAMs), NADPH oxidases (NOXs) and phosphoinositides. Acts as an organizer protein that allows NOX1- or NOX3-dependent reactive oxygen species (ROS) generation and ROS localization. In association with ADAM12, mediates the neurotoxic effect of amyloid-beta peptide. This chain is SH3 and PX domain-containing protein 2A, found in Mus musculus (Mouse).